A 644-amino-acid polypeptide reads, in one-letter code: Cell pattern formation-associated protein StuA (644 aa).

Residues 18–33 show a composition bias toward low complexity; it reads ATAHAPASAAPSGISH. 2 disordered regions span residues 18–58 and 86–120; these read ATAH…PGYP and QLPA…APPG. Over residues 38–47 the composition is skewed to polar residues; the sequence is PQSSMMQPGQ. Residues 87 to 104 show a composition bias toward low complexity; sequence LPAMSSSGPSPSLSGAQS. The HTH APSES-type domain occupies 124-230; the sequence is RVTATLWEDE…HDIGALLYHP (107 aa). Residues 158–179 constitute a DNA-binding region (H-T-H motif); sequence GTKLLNVAGMTRGRRDGILKSE. Residues 239–644 are disordered; that stretch reads GSAAMAAVDR…HTMTAQRARR (406 aa). A compositionally biased stretch (polar residues) spans 253 to 269; the sequence is SMQTQRYISGPTTSQPP. The segment covering 315-328 has biased composition (low complexity); the sequence is SASSIMGMSNSGSS. 3 stretches are compositionally biased toward polar residues: residues 334–357, 371–383, and 395–404; these read ANVQ…TRSV, QAIS…SYDN, and PGQYNTQGQS. A compositionally biased stretch (basic and acidic residues) spans 456–465; the sequence is EGDHEHDNEY. Positions 509 to 524 are enriched in low complexity; the sequence is GSGRATPRTTTTSQTQ. The span at 525–544 shows a compositional bias: polar residues; sequence WNSGYPTPQRQGPPSSNLYN. A nuclear localization domain region spans residues 584-612; that stretch reads KRGRDDDDEDPYRPDSVQSDDMGGLKRRK. A compositionally biased stretch (polar residues) spans 635–644; sequence HTMTAQRARR.

The protein belongs to the EFG1/PHD1/stuA family.

It is found in the nucleus. Transcription factor that regulates asexual reproduction. Binds the StuA-response elements (StRE) with the consensus sequence 5'-(A/T)CGCG(T/A)N(A/C)-3' at the promoters of target genes. Required for pathogenicity and positively regulates the synthesis of the mycotoxin alternariol. Acts as a positive regulator of Tox3 but is not required for the expression of ToxA. Also acts as a central regulator of carbon metabolism including glycolysis, the TCA cycle, and amino acid synthesis. The polypeptide is Cell pattern formation-associated protein StuA (Phaeosphaeria nodorum (strain SN15 / ATCC MYA-4574 / FGSC 10173) (Glume blotch fungus)).